The sequence spans 100 residues: Guanine nucleotide-binding protein subunit gamma 2 (100 aa).

Methionine 1 bears the N-acetylmethionine mark. Residues 19–55 (TRGKHRIQAELKRLEQEARFLEEELEQLEKMDNASAS) are a coiled coil. One can recognise a G protein gamma domain in the interval 21 to 100 (GKHRIQAELK…EAKRCGCSIL (80 aa)). Positions 90-96 (KEAKRCG) are regulates lipidation and cell membrane subcellular localization. The S-palmitoyl cysteine moiety is linked to residue cysteine 95. At cysteine 97 the chain carries Cysteine methyl ester. Residue cysteine 97 is the site of S-farnesyl cysteine attachment. A propeptide spans 98–100 (SIL) (removed in mature form).

G proteins are composed of 3 units, alpha, beta and gamma. GPG1 interacts with the beta subunit GB1. The dimer GB1-GG2 interacts with NDL1, NDL2 and NDL3. Binds to NUDT7. As to expression, mostly expressed in roots (excluded from the stele), seedlings (especially at the hypocotyl/root junction), floral stems, floral buds, flowers and siliques, and, to a lower extent, in leaves (restricted to guard cells). Also present in hydathods.

It localises to the cell membrane. Functionally, guanine nucleotide-binding proteins (G proteins) are involved as a modulator or transducer in various transmembrane signaling systems. The beta and gamma chains are required for the GTPase activity, for replacement of GDP by GTP, and for G protein-effector interaction. Involved in the abscisic acid (ABA) and ethylene signaling pathways. Regulates basipetal transport of auxin (IAA) in roots and hypocotyls, and thus modulates root architecture (e.g. lateral root formation). The heterotrimeric G-protein controls defense responses to necrotrophic and vascular fungi probably by modulating cell wall-related genes expression; involved in resistance to Plectosphaerella cucumerina. The sequence is that of Guanine nucleotide-binding protein subunit gamma 2 (GG2) from Arabidopsis thaliana (Mouse-ear cress).